The primary structure comprises 402 residues: Arginine deiminase (402 aa).

Catalysis depends on Cys392, which acts as the Amidino-cysteine intermediate.

It belongs to the arginine deiminase family.

The protein resides in the cytoplasm. It catalyses the reaction L-arginine + H2O = L-citrulline + NH4(+). It functions in the pathway amino-acid degradation; L-arginine degradation via ADI pathway; carbamoyl phosphate from L-arginine: step 1/2. The protein is Arginine deiminase of Mycobacterium avium (strain 104).